We begin with the raw amino-acid sequence, 445 residues long: Phosphoglucosamine mutase (445 aa).

The active-site Phosphoserine intermediate is Ser-102. The Mg(2+) site is built by Ser-102, Asp-241, Asp-243, and Asp-245. Ser-102 bears the Phosphoserine mark.

This sequence belongs to the phosphohexose mutase family. The cofactor is Mg(2+). Post-translationally, activated by phosphorylation.

It carries out the reaction alpha-D-glucosamine 1-phosphate = D-glucosamine 6-phosphate. Catalyzes the conversion of glucosamine-6-phosphate to glucosamine-1-phosphate. The polypeptide is Phosphoglucosamine mutase (Salmonella choleraesuis (strain SC-B67)).